The sequence spans 360 residues: Photosystem II protein D1 1 (360 aa).

The next 3 membrane-spanning stretches (helical) occupy residues 29–46 (YVGW…TAAI), 118–133 (HFLI…QWEL), and 142–156 (WIPV…AATA). H118 provides a ligand contact to chlorophyll a. Position 126 (Y126) interacts with pheophytin a. Residues D170 and E189 each contribute to the [CaMn4O5] cluster site. Residues 197-218 (FHMIGVAGVFGGALFSAMHGSL) form a helical membrane-spanning segment. H198 is a chlorophyll a binding site. A quinone contacts are provided by residues H215 and 264 to 265 (SF). Residue H215 coordinates Fe cation. H272 is a binding site for Fe cation. The helical transmembrane segment at 274–288 (FLAAWPVIGIWFAAL) threads the bilayer. H332, E333, D342, and A344 together coordinate [CaMn4O5] cluster. The propeptide occupies 345–360 (SGEVQPIALAAPAIAS).

This sequence belongs to the reaction center PufL/M/PsbA/D family. PSII is composed of 1 copy each of membrane proteins PsbA, PsbB, PsbC, PsbD, PsbE, PsbF, PsbH, PsbI, PsbJ, PsbK, PsbL, PsbM, PsbT, PsbX, PsbY, PsbZ, Psb30/Ycf12, peripheral proteins PsbO, CyanoQ (PsbQ), PsbU, PsbV and a large number of cofactors. It forms dimeric complexes. The D1/D2 heterodimer binds P680, chlorophylls that are the primary electron donor of PSII, and subsequent electron acceptors. It shares a non-heme iron and each subunit binds pheophytin, quinone, additional chlorophylls, carotenoids and lipids. D1 provides most of the ligands for the Mn4-Ca-O5 cluster of the oxygen-evolving complex (OEC). There is also a Cl(-1) ion associated with D1 and D2, which is required for oxygen evolution. The PSII complex binds additional chlorophylls, carotenoids and specific lipids. serves as cofactor. Post-translationally, tyr-161 forms a radical intermediate that is referred to as redox-active TyrZ, YZ or Y-Z. C-terminally processed by CtpA; processing is essential to allow assembly of the oxygen-evolving complex and thus photosynthetic growth.

Its subcellular location is the cellular thylakoid membrane. The enzyme catalyses 2 a plastoquinone + 4 hnu + 2 H2O = 2 a plastoquinol + O2. Functionally, photosystem II (PSII) is a light-driven water:plastoquinone oxidoreductase that uses light energy to abstract electrons from H(2)O, generating O(2) and a proton gradient subsequently used for ATP formation. It consists of a core antenna complex that captures photons, and an electron transfer chain that converts photonic excitation into a charge separation. The D1/D2 (PsbA/PsbD) reaction center heterodimer binds P680, the primary electron donor of PSII as well as several subsequent electron acceptors. This Trichormus variabilis (strain ATCC 29413 / PCC 7937) (Anabaena variabilis) protein is Photosystem II protein D1 1.